Here is a 324-residue protein sequence, read N- to C-terminus: Beta-ketoacyl-[acyl-carrier-protein] synthase III (324 aa).

Residues C113 and H251 contribute to the active site. The ACP-binding stretch occupies residues 252-256 (QANKR). N281 is an active-site residue.

It belongs to the thiolase-like superfamily. FabH family. As to quaternary structure, homodimer.

The protein resides in the cytoplasm. The catalysed reaction is malonyl-[ACP] + acetyl-CoA + H(+) = 3-oxobutanoyl-[ACP] + CO2 + CoA. The protein operates within lipid metabolism; fatty acid biosynthesis. Catalyzes the condensation reaction of fatty acid synthesis by the addition to an acyl acceptor of two carbons from malonyl-ACP. Catalyzes the first condensation reaction which initiates fatty acid synthesis and may therefore play a role in governing the total rate of fatty acid production. Possesses both acetoacetyl-ACP synthase and acetyl transacylase activities. Its substrate specificity determines the biosynthesis of branched-chain and/or straight-chain of fatty acids. In Bartonella bacilliformis (strain ATCC 35685 / KC583 / Herrer 020/F12,63), this protein is Beta-ketoacyl-[acyl-carrier-protein] synthase III.